The chain runs to 35 residues: Photosystem II reaction center protein T (35 aa).

Residues 3–23 (ALVYTFLLVSTLGIIFFAIFF) form a helical membrane-spanning segment.

Belongs to the PsbT family. In terms of assembly, PSII is composed of 1 copy each of membrane proteins PsbA, PsbB, PsbC, PsbD, PsbE, PsbF, PsbH, PsbI, PsbJ, PsbK, PsbL, PsbM, PsbT, PsbY, PsbZ, Psb30/Ycf12, at least 3 peripheral proteins of the oxygen-evolving complex and a large number of cofactors. It forms dimeric complexes.

The protein localises to the plastid. Its subcellular location is the chloroplast thylakoid membrane. Found at the monomer-monomer interface of the photosystem II (PS II) dimer, plays a role in assembly and dimerization of PSII. PSII is a light-driven water plastoquinone oxidoreductase, using light energy to abstract electrons from H(2)O, generating a proton gradient subsequently used for ATP formation. The polypeptide is Photosystem II reaction center protein T (Drimys granadensis).